The sequence spans 132 residues: PGA2-homolog C27.01c (132 aa).

Residues 17–34 (WIRIIVYVGGYMLIRPYL) form a helical membrane-spanning segment. Disordered stretches follow at residues 50–90 (LLEG…DAEF) and 106–132 (EYFKNQDKSPLDAYADDDEDIEEHLED). Basic and acidic residues predominate over residues 62 to 75 (EMTHGTKPKEHGEF). Over residues 76 to 87 (DTDDEEEEENPD) the composition is skewed to acidic residues. Residue Thr-77 is modified to Phosphothreonine. The segment covering 106–115 (EYFKNQDKSP) has biased composition (basic and acidic residues). A compositionally biased stretch (acidic residues) spans 119 to 132 (YADDDEDIEEHLED).

This sequence belongs to the PGA2 family.

The protein localises to the endoplasmic reticulum membrane. Its subcellular location is the nucleus membrane. Its function is as follows. Involved processing and trafficking glycosylated proteins. This chain is PGA2-homolog C27.01c, found in Schizosaccharomyces pombe (strain 972 / ATCC 24843) (Fission yeast).